A 572-amino-acid chain; its full sequence is Myb-like protein Y (572 aa).

A compositionally biased stretch (polar residues) spans 196–211 (QSQSQLPTATNNNNKQ). Positions 196–283 (QSQSQLPTAT…NNNNNNNNNE (88 aa)) are disordered. Low complexity-rich tracts occupy residues 222-237 (TATA…TTTT) and 260-281 (NDNN…NNNN). The 50-residue stretch at 311–360 (PWTVEDQKKLEDALTKYPPSRFSSVSRWQMVSKELGISPKAVALRYNQML) folds into the Myb-like domain. The tract at residues 367–456 (KPSLQQQQQQ…TTVTPNMTTP (90 aa)) is disordered. 2 stretches are compositionally biased toward low complexity: residues 371 to 392 (QQQQ…TTTT) and 414 to 425 (SSFSSPSSSSKE). Residues 426-435 (SPNKKEKTTH) are compositionally biased toward basic and acidic residues. Residues 436–455 (DTTTTTNTATTTTVTPNMTT) show a composition bias toward low complexity.

The chain is Myb-like protein Y (mybY) from Dictyostelium discoideum (Social amoeba).